We begin with the raw amino-acid sequence, 690 residues long: Eukaryotic translation initiation factor 3 subunit B (690 aa).

The segment covering 1 to 11 (MAKKKSEEHSS) has biased composition (basic and acidic residues). Residues 1-33 (MAKKKSEEHSSADANDSDYQEEPNFDDPPNFVD) form a disordered region. Residues 15 to 25 (NDSDYQEEPNF) show a composition bias toward acidic residues. The RRM domain occupies 57–141 (SVVVVDNIPK…HTFAVNLFTD (85 aa)). WD repeat units lie at residues 207–246 (TRER…KIQK), 293–331 (DGMS…LLDL), 334–369 (IKIP…TLME), 442–484 (EIRE…KPSL), and 530–575 (PDHF…IKRT). The stretch at 614–645 (QKDRLRLTRASKELLEKRSQLRETFMEYRNKR) forms a coiled coil.

It belongs to the eIF-3 subunit B family. In terms of assembly, component of the eukaryotic translation initiation factor 3 (eIF-3) complex. The eIF-3 complex interacts with pix. Interacts with mxt.

The protein resides in the cytoplasm. In terms of biological role, RNA-binding component of the eukaryotic translation initiation factor 3 (eIF-3) complex, which is involved in protein synthesis of a specialized repertoire of mRNAs and, together with other initiation factors, stimulates binding of mRNA and methionyl-tRNAi to the 40S ribosome. The eIF-3 complex specifically targets and initiates translation of a subset of mRNAs involved in cell proliferation. This is Eukaryotic translation initiation factor 3 subunit B from Drosophila willistoni (Fruit fly).